Here is a 396-residue protein sequence, read N- to C-terminus: Protein-export membrane protein SecD (396 aa).

6 consecutive transmembrane segments (helical) span residues 12–32, 243–263, 272–292, 298–318, 338–358, and 360–380; these read ILIL…KGLD, LKGT…IVSI, IPIL…ASLI, LPSI…QIVI, FFII…LFVL, and VGML…GIFI.

This sequence belongs to the SecD/SecF family. SecD subfamily. In terms of assembly, part of the protein translocation apparatus. Forms a complex with SecF.

It is found in the cell membrane. Involved in protein export. The protein is Protein-export membrane protein SecD of Methanocaldococcus jannaschii (strain ATCC 43067 / DSM 2661 / JAL-1 / JCM 10045 / NBRC 100440) (Methanococcus jannaschii).